The primary structure comprises 319 residues: Meiotic drive suppressor wtf16 (319 aa).

2 disordered regions span residues 1–22 and 35–68; these read MKNN…KTGH and DSEE…RSTD. 6 helical membrane-spanning segments follow: residues 73–93, 110–130, 153–173, 187–207, 215–235, and 241–261; these read FLIK…LAIC, WTLF…LTYF, VVII…CIKF, CSIS…FWTL, FQVL…MYLF, and ATGY…FFFY.

The protein belongs to the WTF family. As to quaternary structure, homomer. Interacts with other proteins that exhibit high sequence similarity.

The protein localises to the spore membrane. It is found in the vacuole membrane. Functionally, acts as a suppressor component of the dual wtf meiotic drive system, and can suppress but not confer meiotic drive by compatible poisons. Wtf meiotic drive systems promote unequal transmission of alleles from the parental zygote to progeny spores by encoding a poison and an antidote from the same locus; the poison is trans-acting and forms toxic aggregates in all spores within an ascus, wherease the antidote is spore-specific and targets aggregates for degradation by the vacuole. Meiotic drive by wtf systems therefore lead to poisoning of all progeny that do not inherit the dual poison/antidote allele, or express a compatible antidote. This Schizosaccharomyces pombe (strain 972 / ATCC 24843) (Fission yeast) protein is Meiotic drive suppressor wtf16.